A 406-amino-acid polypeptide reads, in one-letter code: Phosphopentomutase (406 aa).

Mn(2+)-binding residues include D10, D305, H310, D346, H347, and H358.

This sequence belongs to the phosphopentomutase family. Requires Mn(2+) as cofactor.

Its subcellular location is the cytoplasm. It catalyses the reaction 2-deoxy-alpha-D-ribose 1-phosphate = 2-deoxy-D-ribose 5-phosphate. It carries out the reaction alpha-D-ribose 1-phosphate = D-ribose 5-phosphate. Its pathway is carbohydrate degradation; 2-deoxy-D-ribose 1-phosphate degradation; D-glyceraldehyde 3-phosphate and acetaldehyde from 2-deoxy-alpha-D-ribose 1-phosphate: step 1/2. Its function is as follows. Isomerase that catalyzes the conversion of deoxy-ribose 1-phosphate (dRib-1-P) and ribose 1-phosphate (Rib-1-P) to deoxy-ribose 5-phosphate (dRib-5-P) and ribose 5-phosphate (Rib-5-P), respectively. The sequence is that of Phosphopentomutase from Photobacterium profundum (strain SS9).